Reading from the N-terminus, the 466-residue chain is Ribulose bisphosphate carboxylase large chain (466 aa).

Residue Lys-5 is modified to N6,N6,N6-trimethyllysine. Asn-114 and Thr-164 together coordinate substrate. Residue Lys-166 is the Proton acceptor of the active site. A substrate-binding site is contributed by Lys-168. Mg(2+)-binding residues include Lys-192, Asp-194, and Glu-195. Position 192 is an N6-carboxylysine (Lys-192). Residue His-285 is the Proton acceptor of the active site. Substrate contacts are provided by Arg-286, His-318, and Ser-370.

It belongs to the RuBisCO large chain family. Type I subfamily. In terms of assembly, heterohexadecamer of 8 large chains and 8 small chains; disulfide-linked. The disulfide link is formed within the large subunit homodimers. It depends on Mg(2+) as a cofactor. Post-translationally, the disulfide bond which can form in the large chain dimeric partners within the hexadecamer appears to be associated with oxidative stress and protein turnover.

It localises to the plastid. It is found in the chloroplast. The catalysed reaction is 2 (2R)-3-phosphoglycerate + 2 H(+) = D-ribulose 1,5-bisphosphate + CO2 + H2O. It catalyses the reaction D-ribulose 1,5-bisphosphate + O2 = 2-phosphoglycolate + (2R)-3-phosphoglycerate + 2 H(+). Functionally, ruBisCO catalyzes two reactions: the carboxylation of D-ribulose 1,5-bisphosphate, the primary event in carbon dioxide fixation, as well as the oxidative fragmentation of the pentose substrate in the photorespiration process. Both reactions occur simultaneously and in competition at the same active site. This chain is Ribulose bisphosphate carboxylase large chain, found in Averrhoa carambola (Star fruit).